A 657-amino-acid chain; its full sequence is Methionine--tRNA ligase (657 aa).

The 'HIGH' region motif lies at 13-23 (YYPSGNLHIGH). Positions 308-312 (KMSKS) match the 'KMSKS' region motif. K311 lines the ATP pocket. The tRNA-binding domain occupies 557 to 657 (DFDKVEIKAA…SAIPNGAVIK (101 aa)).

This sequence belongs to the class-I aminoacyl-tRNA synthetase family. MetG type 2B subfamily. Homodimer.

It is found in the cytoplasm. The enzyme catalyses tRNA(Met) + L-methionine + ATP = L-methionyl-tRNA(Met) + AMP + diphosphate. Functionally, is required not only for elongation of protein synthesis but also for the initiation of all mRNA translation through initiator tRNA(fMet) aminoacylation. This chain is Methionine--tRNA ligase, found in Staphylococcus aureus (strain COL).